The sequence spans 574 residues: Proline--tRNA ligase (574 aa).

It belongs to the class-II aminoacyl-tRNA synthetase family. ProS type 1 subfamily. In terms of assembly, homodimer.

The protein resides in the cytoplasm. The enzyme catalyses tRNA(Pro) + L-proline + ATP = L-prolyl-tRNA(Pro) + AMP + diphosphate. Catalyzes the attachment of proline to tRNA(Pro) in a two-step reaction: proline is first activated by ATP to form Pro-AMP and then transferred to the acceptor end of tRNA(Pro). As ProRS can inadvertently accommodate and process non-cognate amino acids such as alanine and cysteine, to avoid such errors it has two additional distinct editing activities against alanine. One activity is designated as 'pretransfer' editing and involves the tRNA(Pro)-independent hydrolysis of activated Ala-AMP. The other activity is designated 'posttransfer' editing and involves deacylation of mischarged Ala-tRNA(Pro). The misacylated Cys-tRNA(Pro) is not edited by ProRS. The protein is Proline--tRNA ligase of Teredinibacter turnerae (strain ATCC 39867 / T7901).